We begin with the raw amino-acid sequence, 381 residues long: Succinyl-diaminopimelate desuccinylase (381 aa).

Residue His68 participates in Zn(2+) binding. Residue Asp70 is part of the active site. Asp101 is a binding site for Zn(2+). Glu135 serves as the catalytic Proton acceptor. Glu136, Glu164, and His350 together coordinate Zn(2+).

It belongs to the peptidase M20A family. DapE subfamily. As to quaternary structure, homodimer. Zn(2+) is required as a cofactor. Co(2+) serves as cofactor.

The catalysed reaction is N-succinyl-(2S,6S)-2,6-diaminopimelate + H2O = (2S,6S)-2,6-diaminopimelate + succinate. It participates in amino-acid biosynthesis; L-lysine biosynthesis via DAP pathway; LL-2,6-diaminopimelate from (S)-tetrahydrodipicolinate (succinylase route): step 3/3. Catalyzes the hydrolysis of N-succinyl-L,L-diaminopimelic acid (SDAP), forming succinate and LL-2,6-diaminopimelate (DAP), an intermediate involved in the bacterial biosynthesis of lysine and meso-diaminopimelic acid, an essential component of bacterial cell walls. This chain is Succinyl-diaminopimelate desuccinylase, found in Neisseria meningitidis serogroup C / serotype 2a (strain ATCC 700532 / DSM 15464 / FAM18).